We begin with the raw amino-acid sequence, 235 residues long: Alpha-S2-casein (235 aa).

Residues 1-15 (MKFFIFTCLLAVAFA) form the signal peptide. Phosphoserine occurs at positions 23, 24, 25, 28, 47, 72, 73, 74, 77, 147, 149, and 168. Polar residues predominate over residues 144–158 (EELSTSEEPVSSSQE). The disordered stretch occupies residues 144–163 (EELSTSEEPVSSSQEENTKT).

This sequence belongs to the alpha-casein family. Mammary gland specific. Secreted in milk.

The protein localises to the secreted. In terms of biological role, important role in the capacity of milk to transport calcium phosphate. In Sus scrofa (Pig), this protein is Alpha-S2-casein (CSN1S2).